The chain runs to 384 residues: G protein-coupled receptor 88 (384 aa).

At 1–35 (MTNSSSTSTSTTTGGSLLLLCEEEESWAGRRIPVS) the chain is on the extracellular side. Residue N3 is glycosylated (N-linked (GlcNAc...) asparagine). Residues 36 to 56 (LLYSGLAIGGTLANGMVIYLV) form a helical membrane-spanning segment. Over 57–73 (SSFRKLQTTSNAFIVNG) the chain is Cytoplasmic. Residues 74–94 (CAADLSVCALWMPQEAVLGLL) form a helical membrane-spanning segment. Residues 95–116 (PAGSAEPPGDWDSGGGSYRLLR) lie on the Extracellular side of the membrane. A helical transmembrane segment spans residues 117 to 136 (GGLLGLGLTVSLLSHCLVAL). The Cytoplasmic segment spans residues 137–158 (NRYLLITRAPATYQVLYQRRHT). Residues 159 to 179 (AGMLALSWALALGLVLLLPPW) traverse the membrane as a helical segment. The Extracellular segment spans residues 180–195 (APKPGAEPPQVHYPAL). Residues 196–216 (LAAGALLAQTALLLHCYLGIV) traverse the membrane as a helical segment. Topologically, residues 217 to 285 (RRVRVSVKRV…RAQRRLSGLS (69 aa)) are cytoplasmic. A helical transmembrane segment spans residues 286 to 306 (VLLLCCVFLLATQPLVWVSLA). The Extracellular portion of the chain corresponds to 307–310 (SGFS). The helical transmembrane segment at 311–331 (LPVPWGVQAASWLLCCALSAL) threads the bilayer. Residues 332–384 (NPLLYTWRNEEFRRSVRSVLPGVGDAAAAAAAATAVPAMSQAQLGTRAAGQHW) are Cytoplasmic-facing.

It belongs to the G-protein coupled receptor 1 family. As to expression, expressed predominantly in the striatum. Expressed also in olfactory tubercle, nucleus accumbens, amygdala, and neocortex. Spinal cord, pons, and medulla expression remains discrete. Also expressed in peripheral tissues, including adrenal cortex (16 dpc to 21 dpc) and cochlear ganglia (19 dpc to P3) and also at moderate levels in retina (18 dpc to 19 dpc) and spleen (21 dpc to P7).

The protein localises to the cell membrane. It localises to the cell projection. It is found in the cilium membrane. The protein resides in the cytoplasm. Its subcellular location is the nucleus. Its function is as follows. Orphan G protein-coupled receptor implicated in a large repertoire of behavioral responses that engage motor activities, spatial learning, and emotional processing. May play a role in the regulation of cognitive and motor function. Couples with the heterotrimeric G protein complex of the G(i) subfamily, consisting of GNAI1, GNB1 and GNG2, thereby acting through a G(i)-mediated pathway. Plays a role in the attenuation of D1 dopamine receptor (D1R)-mediated cAMP response in ciliated cells. In non-ciliated cells, involved in the inhibition of the beta-2 adrenergic receptor (B2AR) response. The chain is G protein-coupled receptor 88 (Gpr88) from Rattus norvegicus (Rat).